Consider the following 334-residue polypeptide: D-fructose 1,6-bisphosphatase class 2/sedoheptulose 1,7-bisphosphatase (334 aa).

Aspartate 33, glutamate 57, aspartate 85, and glutamate 88 together coordinate Mn(2+). Residues 88–90 (EGT), tyrosine 119, 164–166 (RAR), and 186–188 (DGD) each bind substrate. Glutamate 213 serves as a coordination point for Mn(2+).

This sequence belongs to the FBPase class 2 family. Homotetramer. Requires Mn(2+) as cofactor.

It carries out the reaction beta-D-fructose 1,6-bisphosphate + H2O = beta-D-fructose 6-phosphate + phosphate. The enzyme catalyses D-sedoheptulose 1,7-bisphosphate + H2O = D-sedoheptulose 7-phosphate + phosphate. It functions in the pathway carbohydrate biosynthesis; Calvin cycle. Catalyzes the hydrolysis of fructose 1,6-bisphosphate (Fru 1,6-P2) and sedoheptulose 1,7-bisphosphate (Sed 1,7-P2) to fructose 6-phosphate and sedoheptulose 7-phosphate, respectively. The sequence is that of D-fructose 1,6-bisphosphatase class 2/sedoheptulose 1,7-bisphosphatase from Prochlorococcus marinus (strain MIT 9303).